Reading from the N-terminus, the 240-residue chain is Adapter protein MecA (240 aa).

Over residues Gln-119–Gln-132 the composition is skewed to basic and acidic residues. The tract at residues Gln-119–Pro-138 is disordered.

It belongs to the MecA family. Homodimer.

In terms of biological role, enables the recognition and targeting of unfolded and aggregated proteins to the ClpC protease or to other proteins involved in proteolysis. This chain is Adapter protein MecA, found in Staphylococcus epidermidis (strain ATCC 35984 / DSM 28319 / BCRC 17069 / CCUG 31568 / BM 3577 / RP62A).